The sequence spans 511 residues: NAD(P)H-quinone oxidoreductase subunit 2 B, chloroplastic (511 aa).

A run of 13 helical transmembrane segments spans residues 24–44 (LLLFHGSFIFPECILIFGLIL), 57–77 (IPWLYFISSTSLVMSIAALLF), 99–119 (IFQFLILLCSTLCIPLSVEYI), 124–144 (MAITEFLLFVLTATLGGMFLC), 149–169 (LITIFVAPECFSLCSYLLSGY), 183–203 (YLLMGGASSSILVHGFSWLYG), 227–247 (PGISIALIFITVGIGFKLSPA), 295–315 (WHLLLEILAILSMILGNLIAI), 323–343 (MLAYSSIGQIGYVIIGIIVGD), 354–374 (YMLFYISMNLGTFACIVLFGL), 395–415 (ALSLALCLLSLGGLPPLAGFF), 418–438 (LHLFWCGWQAGLYFLVSIGLL), and 484–504 (MIVCVIASTIPGISMNPIIAI).

The protein belongs to the complex I subunit 2 family. In terms of assembly, NDH is composed of at least 16 different subunits, 5 of which are encoded in the nucleus.

The protein resides in the plastid. Its subcellular location is the chloroplast thylakoid membrane. It carries out the reaction a plastoquinone + NADH + (n+1) H(+)(in) = a plastoquinol + NAD(+) + n H(+)(out). The enzyme catalyses a plastoquinone + NADPH + (n+1) H(+)(in) = a plastoquinol + NADP(+) + n H(+)(out). NDH shuttles electrons from NAD(P)H:plastoquinone, via FMN and iron-sulfur (Fe-S) centers, to quinones in the photosynthetic chain and possibly in a chloroplast respiratory chain. The immediate electron acceptor for the enzyme in this species is believed to be plastoquinone. Couples the redox reaction to proton translocation, and thus conserves the redox energy in a proton gradient. In Nandina domestica (Heavenly bamboo), this protein is NAD(P)H-quinone oxidoreductase subunit 2 B, chloroplastic.